The primary structure comprises 172 residues: Transcriptional repressor NrdR (172 aa).

Residues Cys-3–Cys-34 fold into a zinc finger. The ATP-cone domain maps to Leu-46–Asp-136. Positions Glu-152–Asp-172 are disordered. Over residues Thr-161 to Asp-172 the composition is skewed to low complexity.

This sequence belongs to the NrdR family. Zn(2+) is required as a cofactor.

Negatively regulates transcription of bacterial ribonucleotide reductase nrd genes and operons by binding to NrdR-boxes. This is Transcriptional repressor NrdR from Streptomyces clavuligerus.